Reading from the N-terminus, the 341-residue chain is tRNA N6-adenosine threonylcarbamoyltransferase (341 aa).

Residues H119 and H123 each coordinate Fe cation. Substrate-binding positions include 141-145 (MVSGG), D174, G187, and N279. Residue D307 coordinates Fe cation.

It belongs to the KAE1 / TsaD family. Fe(2+) is required as a cofactor.

It is found in the cytoplasm. It catalyses the reaction L-threonylcarbamoyladenylate + adenosine(37) in tRNA = N(6)-L-threonylcarbamoyladenosine(37) in tRNA + AMP + H(+). In terms of biological role, required for the formation of a threonylcarbamoyl group on adenosine at position 37 (t(6)A37) in tRNAs that read codons beginning with adenine. Is involved in the transfer of the threonylcarbamoyl moiety of threonylcarbamoyl-AMP (TC-AMP) to the N6 group of A37, together with TsaE and TsaB. TsaD likely plays a direct catalytic role in this reaction. This chain is tRNA N6-adenosine threonylcarbamoyltransferase, found in Oenococcus oeni (strain ATCC BAA-331 / PSU-1).